The following is a 2151-amino-acid chain: RNA-directed RNA polymerase L (2151 aa).

Mn(2+) contacts are provided by H36, E54, D97, E110, and V111. Residue K124 is the For endonuclease activity of the active site. The region spanning 956–1142 (NGKFIRMKRK…SVNTEMWKSM (187 aa)) is the RdRp catalytic domain. D1099 lines the Mg(2+) pocket.

Belongs to the Bunyavirales RNA polymerase family. In terms of assembly, interacts with the viral nucleoprotein. Mn(2+) is required as a cofactor. The cofactor is Mg(2+).

The protein localises to the host cytoplasm. It is found in the host perinuclear region. The enzyme catalyses RNA(n) + a ribonucleoside 5'-triphosphate = RNA(n+1) + diphosphate. Its function is as follows. RNA-dependent RNA polymerase, which is responsible for the replication and transcription of the viral RNA genome using antigenomic RNA as an intermediate. During transcription, synthesizes subgenomic RNAs and assures their capping by a cap-snatching mechanism, which involves the endonuclease activity cleaving the host capped pre-mRNAs. These short capped RNAs are then used as primers for viral transcription. Cleaves ssRNA substrates but not DNA. Seems to downregulate the expression of its own and heterologous mRNAs through its endonuclease activity. This Apodemus agrarius (Eurasian field mouse) protein is RNA-directed RNA polymerase L.